The primary structure comprises 55 residues: Large ribosomal subunit protein bL33B (55 aa).

This sequence belongs to the bacterial ribosomal protein bL33 family.

The polypeptide is Large ribosomal subunit protein bL33B (Mycolicibacterium paratuberculosis (strain ATCC BAA-968 / K-10) (Mycobacterium paratuberculosis)).